The sequence spans 278 residues: Orotidine 5'-phosphate decarboxylase (278 aa).

Substrate-binding positions include Asp-40, 62–64 (KTH), 93–102 (DRKFIDIGNT), Tyr-228, and Arg-246. Lys-95 serves as the catalytic Proton donor.

This sequence belongs to the OMP decarboxylase family.

The enzyme catalyses orotidine 5'-phosphate + H(+) = UMP + CO2. Its pathway is pyrimidine metabolism; UMP biosynthesis via de novo pathway; UMP from orotate: step 2/2. This Passalora fulva (Tomato leaf mold) protein is Orotidine 5'-phosphate decarboxylase (PYR1).